The primary structure comprises 240 residues: 1-(5-phosphoribosyl)-5-[(5-phosphoribosylamino)methylideneamino] imidazole-4-carboxamide isomerase (240 aa).

Catalysis depends on Asp8, which acts as the Proton acceptor. The active-site Proton donor is the Asp129.

It belongs to the HisA/HisF family.

It localises to the cytoplasm. The catalysed reaction is 1-(5-phospho-beta-D-ribosyl)-5-[(5-phospho-beta-D-ribosylamino)methylideneamino]imidazole-4-carboxamide = 5-[(5-phospho-1-deoxy-D-ribulos-1-ylimino)methylamino]-1-(5-phospho-beta-D-ribosyl)imidazole-4-carboxamide. It participates in amino-acid biosynthesis; L-histidine biosynthesis; L-histidine from 5-phospho-alpha-D-ribose 1-diphosphate: step 4/9. This is 1-(5-phosphoribosyl)-5-[(5-phosphoribosylamino)methylideneamino] imidazole-4-carboxamide isomerase from Clostridioides difficile (strain 630) (Peptoclostridium difficile).